The following is a 780-amino-acid chain: Cullin-5 (780 aa).

Serine 34 is subject to Phosphoserine. A Phosphothreonine modification is found at threonine 210. Residues 711-772 form the Cullin neddylation domain; the sequence is RILRTQEAII…HRYIRRDEAD (62 aa). A Glycyl lysine isopeptide (Lys-Gly) (interchain with G-Cter in NEDD8) cross-link involves residue lysine 724.

The protein belongs to the cullin family. Component of multiple cullin-5-RING E3 ubiquitin-protein ligase complexes (ECS complexes, also named CRL5 complexes) formed of CUL5, Elongin BC (ELOB and ELOC), RNF7/RBX2 and a variable SOCS box domain-containing protein as substrate-specific recognition component. CUL5-containing ECS complexes specifically contain RNF7/RBX2, and not RBX1, as catalytic subunit. Component of the ECS(ASB2) complex with the substrate recognition component ASB2. Component of the ECS(ASB6) complex with the substrate recognition component ASB6. Component of the ECS(ASB7) complex with the substrate recognition component ASB7. Component of the ECS(ASB9) complex with the substrate recognition component ASB9. Component of the ECS(ASB11) complex with the substrate recognition component ASB11. Component of the ECS(ASB12) complex with the substrate recognition component ASB12. Component of the ECS(LRRC41) complex with the substrate recognition component LRRC41. Component of the ECS(SOCS1) complex with the substrate recognition component SOCS1. Component of the ECS(SOCS2) complex with the substrate recognition component SOCS2. Component of the ECS(WSB1) complex with the substrate recognition subunit WSB1. Component of the ECS(SOCS3) complex with the substrate recognition component SOCS3. Component of the ECS(SOCS7) complex with the substrate recognition component SOCS7. Component of the ECS(SPSB1) complex with the substrate recognition component SPSB1. Component of the ECS(SPSB3) complex with the substrate recognition component SPSB3. Component of the ECS(SPSB2) complex with the substrate recognition component SPSB2. Component of the ECS(SPSB4) complex with the substrate recognition component SPSB4. Component of the ECS(RAB40) complex with the substrate recognition subunit RAB40A, RAB40B or RAB40C. Component of the ECS(KLHDC1) complex with the substrate recognition component KLHDC1. Component of the ECS(PCMTD1) complex with the substrate recognition subunit PCMTD1. May also form complexes containing RBX1 and ELOA or VHL; additional evidence is however required to confirm this result in vivo. Interacts (when neddylated) with ARIH2; leading to activate the E3 ligase activity of ARIH2. Interacts with ERCC6; the interaction is induced by DNA damaging agents or inhibitors of RNA polymerase II elongation. Interacts with ELOA (via the BC-box). Interacts (unneddylated form) with DCUN1D1, DCUN1D2, DCUN1D3, DCUN1D4 and DCUN1D5; these interactions promote the cullin neddylation. In terms of processing, neddylated; which enhances the ubiquitination activity of ECS complexes and prevents binding of the inhibitor CAND1. Deneddylated via its interaction with the COP9 signalosome (CSN).

Its subcellular location is the nucleus. The protein operates within protein modification; protein ubiquitination. Functionally, core component of multiple cullin-5-RING E3 ubiquitin-protein ligase complexes (ECS complexes, also named CRL5 complexes), which mediate the ubiquitination and subsequent proteasomal degradation of target proteins. Acts a scaffold protein that contributes to catalysis through positioning of the substrate and the ubiquitin-conjugating enzyme. The functional specificity of the E3 ubiquitin-protein ligase complex depends on the variable SOCS box-containing substrate recognition component. Acts as a key regulator of neuron positioning during cortex development: component of various SOCS-containing ECS complexes, such as the ECS(SOCS7) complex, that regulate reelin signaling by mediating ubiquitination and degradation of DAB1. ECS(SOCS1) seems to direct ubiquitination of JAK2. The ECS(SOCS2) complex mediates the ubiquitination and subsequent proteasomal degradation of phosphorylated EPOR and GHR. The ECS(SPSB3) complex catalyzes ubiquitination of nuclear CGAS. ECS(KLHDC1) complex is part of the DesCEND (destruction via C-end degrons) pathway and mediates ubiquitination and degradation of truncated SELENOS selenoprotein produced by failed UGA/Sec decoding, which ends with a glycine. The ECS(ASB9) complex mediates ubiquitination and degradation of CKB. As part of some ECS complex, promotes 'Lys-11'-linked ubiquitination and degradation of BTRC. As part of a multisubunit ECS complex, polyubiquitinates monoubiquitinated POLR2A. As part of the ECS(RAB40C) complex, mediates ANKRD28 ubiquitination and degradation, thereby regulating protein phosphatase 6 (PP6) complex activity and focal adhesion assembly during cell migration. As part of the ECS(RAB40A) complex, mediates RHOU 'Lys-48'-linked ubiquitination and degradation, thus inhibiting focal adhesion disassembly during cell migration. As part of the ECS(RAB40B) complex, mediates LIMA1/EPLIN and RAP2 ubiquitination, thereby regulating actin cytoskeleton dynamics and stress fiber formation during cell migration. May form a cell surface vasopressin receptor. The protein is Cullin-5 of Mus musculus (Mouse).